Reading from the N-terminus, the 137-residue chain is Drosulfakinins (137 aa).

The signal sequence occupies residues 1 to 31 (MGLRSCTHFATLVIPLWALAFCFLVVVPVPA). Positions 32 to 74 (QTNLQTSKGDRRLQDLESNMGAESDQPNANLVRPSLSRFGDKR) are excised as a propeptide. A Phenylalanine amide modification is found at Phe-81. The propeptide occupies 85-107 (VPRPMIPIELDLLMDNDDENTKA). Tyr-113 is subject to Sulfotyrosine. Phe-118 carries the post-translational modification Phenylalanine amide. Tyr-130 is subject to Sulfotyrosine. Phe-135 carries the phenylalanine amide modification.

It belongs to the gastrin/cholecystokinin family.

Its subcellular location is the secreted. In terms of biological role, drosulfakinin-0 (DSK 0) plays diverse biological roles including regulating gut muscle contraction in adults but not in larvae. This chain is Drosulfakinins, found in Drosophila yakuba (Fruit fly).